An 852-amino-acid chain; its full sequence is Translation initiation factor IF-2 (852 aa).

The tract at residues 1–240 is disordered; it reads MEDKNKTIKE…KTSSDKRDFS (240 aa). Residues 78 to 90 show a composition bias toward basic and acidic residues; sequence KEVKYEESSRKQD. The segment covering 106–120 has biased composition (polar residues); the sequence is VRPSGDSSYPVSRSP. Residues 150 to 200 are compositionally biased toward gly residues; sequence RGPGQGGGYQGNRGPGQGGGYQGNRGPGQQTGPGNRFGGSGPGNRSGGPGG. Over residues 227 to 240 the composition is skewed to basic and acidic residues; the sequence is HDKEKTSSDKRDFS. A tr-type G domain is found at 347-516; the sequence is NRPPVVTIMG…LLQAEVMDLK (170 aa). Residues 356-363 form a G1 region; that stretch reads GHVDHGKT. 356–363 contacts GTP; sequence GHVDHGKT. The tract at residues 381–385 is G2; it reads GITQH. The segment at 402-405 is G3; it reads DTPG. GTP contacts are provided by residues 402–406 and 456–459; these read DTPGH and NKID. The tract at residues 456 to 459 is G4; that stretch reads NKID. The G5 stretch occupies residues 492–494; sequence SAR.

This sequence belongs to the TRAFAC class translation factor GTPase superfamily. Classic translation factor GTPase family. IF-2 subfamily.

The protein resides in the cytoplasm. In terms of biological role, one of the essential components for the initiation of protein synthesis. Protects formylmethionyl-tRNA from spontaneous hydrolysis and promotes its binding to the 30S ribosomal subunits. Also involved in the hydrolysis of GTP during the formation of the 70S ribosomal complex. The sequence is that of Translation initiation factor IF-2 from Leptospira borgpetersenii serovar Hardjo-bovis (strain JB197).